The primary structure comprises 143 residues: Nucleoside diphosphate kinase (143 aa).

Residues Lys-11, Phe-59, Arg-87, Thr-93, Arg-104, and Asn-114 each contribute to the ATP site. Catalysis depends on His-117, which acts as the Pros-phosphohistidine intermediate.

This sequence belongs to the NDK family. As to quaternary structure, homotetramer. It depends on Mg(2+) as a cofactor.

It localises to the cytoplasm. It catalyses the reaction a 2'-deoxyribonucleoside 5'-diphosphate + ATP = a 2'-deoxyribonucleoside 5'-triphosphate + ADP. The catalysed reaction is a ribonucleoside 5'-diphosphate + ATP = a ribonucleoside 5'-triphosphate + ADP. Functionally, major role in the synthesis of nucleoside triphosphates other than ATP. The ATP gamma phosphate is transferred to the NDP beta phosphate via a ping-pong mechanism, using a phosphorylated active-site intermediate. The polypeptide is Nucleoside diphosphate kinase (Acinetobacter baylyi (strain ATCC 33305 / BD413 / ADP1)).